A 305-amino-acid polypeptide reads, in one-letter code: Alpha-N-acetylgalactosaminide alpha-2,6-sialyltransferase 3 (305 aa).

Residues 1–8 (MACILKRK) lie on the Cytoplasmic side of the membrane. A helical; Signal-anchor for type II membrane protein membrane pass occupies residues 9–28 (PVLVVSFIALCILLLAMRLV). Residues 29–305 (NDATFPLLLN…VFTHPNWTLS (277 aa)) lie on the Lumenal side of the membrane. Cysteines 80 and 229 form a disulfide. Asparagine 239 and asparagine 301 each carry an N-linked (GlcNAc...) asparagine glycan.

It belongs to the glycosyltransferase 29 family. In adult tissues, high expression in brain, lung and heart and to a lesser extent in kidney, mammary gland, spleen, testis and thymus.

It localises to the golgi apparatus membrane. It carries out the reaction an alpha-Neu5Ac-(2-&gt;3)-beta-D-Gal-(1-&gt;3)-D-GlcNAc derivative + CMP-N-acetyl-beta-neuraminate = an alpha-Neu5Ac-(2-&gt;3)-beta-D-Gal-(1-&gt;3)-[alpha-Neu5Ac-(2-&gt;6)]-D-GlcNAc derivative + CMP + H(+). It catalyses the reaction a ganglioside GM1b (d18:1(4E)) + CMP-N-acetyl-beta-neuraminate = a ganglioside GD1alpha (d18:1(4E)) + CMP + H(+). The catalysed reaction is a globoside MSGG + CMP-N-acetyl-beta-neuraminate = a globoside DSGG + CMP + H(+). The enzyme catalyses 3-O-[alpha-Neu5Ac-(2-&gt;3)-beta-D-Gal-(1-&gt;3)-alpha-D-GalNAc]-L-Ser-[protein] + CMP-N-acetyl-beta-neuraminate = a 3-O-{alpha-Neu5Ac-(2-&gt;3)-beta-D-Gal-(1-&gt;3)-[alpha-Neu5Ac-(2-&gt;6)]-alpha-D-GalNAc}-L-seryl-[protein] + CMP + H(+). It carries out the reaction 3-O-[alpha-Neu5Ac-(2-&gt;3)-beta-D-Gal-(1-&gt;3)-alpha-D-GalNAc]-L-Thr-[protein] + CMP-N-acetyl-beta-neuraminate = a 3-O-{alpha-Neu5Ac-(2-&gt;3)-beta-D-Gal-(1-&gt;3)-[alpha-Neu5Ac-(2-&gt;6)]-alpha-D-GalNAc}-L-threonyl-[protein] + CMP + H(+). It functions in the pathway protein modification; protein glycosylation. Its pathway is glycolipid biosynthesis. Transfers the sialyl group (N-acetyl-alpha-neuraminyl or NeuAc) from CMP-NeuAc to the GalNAc residue on the NeuAc-alpha-2,3-Gal-beta-1,3-GalNAc sequence of glycoproteins and glycolipids forming an alpha-2,6-linkage. Produces branched type disialyl structures by transfer of a sialyl group onto a GalNAc residue inside the backbone core chains. ST6GalNAcIII prefers glycolipids to glycoproteins, predominantly catalyzing the biosynthesis of ganglioside GD1alpha from GM1b. GD1alpha is a critical molecule in the communication and interaction between neuronal cells and their supportive cells, particularly in brain tissues, and functions as an adhesion molecule in the process of metastasis. Sialylation of glycoproteins or glycosphingolipids is very important in tumor development, neuronal development, nerve repair, immunological processes and regulation of hormone sensitivity. This chain is Alpha-N-acetylgalactosaminide alpha-2,6-sialyltransferase 3 (St6galnac3), found in Mus musculus (Mouse).